The primary structure comprises 140 residues: FAD synthase (140 aa).

Residues 9 to 10, 14 to 17, and Asp92 contribute to the ATP site; these read TF and HPGH.

This sequence belongs to the archaeal FAD synthase family. Homodimer. The cofactor is a divalent metal cation.

It catalyses the reaction FMN + ATP + H(+) = FAD + diphosphate. It functions in the pathway cofactor biosynthesis; FAD biosynthesis; FAD from FMN: step 1/1. Functionally, catalyzes the transfer of the AMP portion of ATP to flavin mononucleotide (FMN) to produce flavin adenine dinucleotide (FAD) coenzyme. In Natronomonas pharaonis (strain ATCC 35678 / DSM 2160 / CIP 103997 / JCM 8858 / NBRC 14720 / NCIMB 2260 / Gabara) (Halobacterium pharaonis), this protein is FAD synthase.